The primary structure comprises 147 residues: 3-dehydroquinate dehydratase (147 aa).

The active-site Proton acceptor is tyrosine 22. Residues asparagine 74, histidine 80, and aspartate 87 each coordinate substrate. The active-site Proton donor is the histidine 101. Substrate-binding positions include 102 to 103 (IS) and arginine 112.

It belongs to the type-II 3-dehydroquinase family. Homododecamer.

It catalyses the reaction 3-dehydroquinate = 3-dehydroshikimate + H2O. It participates in metabolic intermediate biosynthesis; chorismate biosynthesis; chorismate from D-erythrose 4-phosphate and phosphoenolpyruvate: step 3/7. Catalyzes a trans-dehydration via an enolate intermediate. In Lachnospira eligens (strain ATCC 27750 / DSM 3376 / VPI C15-48 / C15-B4) (Eubacterium eligens), this protein is 3-dehydroquinate dehydratase.